A 332-amino-acid chain; its full sequence is Torsin-1A (332 aa).

An N-terminal signal peptide occupies residues 1-20 (MKLGRAALGLLLLAPSVVQA). The interval 91–251 (KPKKPLTLSL…VSVFNNKNSG (161 aa)) is interaction with SNAPIN. Residue 102–109 (GWTGTGKN) participates in ATP binding. N-linked (GlcNAc...) asparagine glycosylation is found at N143 and N158. Residues 251–332 (GFWHSSLIDR…FTKLDYYYDD (82 aa)) form an interaction with KLC1 region. The interaction with SYNE3 stretch occupies residues 312 to 332 (RVFSDKGCKTVFTKLDYYYDD).

The protein belongs to the ClpA/ClpB family. Torsin subfamily. Homohexamer. Interacts with TOR1B; the interaction may be specific of neural tissues. Interacts (ATP-bound) with TOR1AIP1 and TOR1AIP2; the interactions induce ATPase activity. Interacts with KLHL14; preferentially when ATP-free. Interacts with KLC1 (via TPR repeats); the interaction associates TOR1A with the kinesin oligomeric complex. Interacts with COPS4; the interaction associates TOR1A with the CSN complex. Interacts with SNAPIN; the interaction is direct and associates SNAPIN with the CSN complex. Interacts with STON2. Interacts (ATP-bound) with SYNE3 (via KASH domain); the interaction is required for SYNE3 nuclear envelope localization. Interacts with VIM; the interaction associates TOR1A with the cytoskeleton. Interacts with PLEC. Interacts (ATP-bound) with SLC6A3; regulates SLC6A3 transport to the plasma membrane. Post-translationally, N-glycosylated.

It is found in the endoplasmic reticulum lumen. The protein resides in the nucleus membrane. Its subcellular location is the cell projection. It localises to the growth cone. The protein localises to the cytoplasmic vesicle membrane. It is found in the cytoplasmic vesicle. The protein resides in the secretory vesicle. Its subcellular location is the synaptic vesicle. It localises to the cytoplasm. The protein localises to the cytoskeleton. It catalyses the reaction ATP + H2O = ADP + phosphate + H(+). Its function is as follows. Protein with chaperone functions important for the control of protein folding, processing, stability and localization as well as for the reduction of misfolded protein aggregates. Involved in the regulation of synaptic vesicle recycling, controls STON2 protein stability in collaboration with the COP9 signalosome complex (CSN). In the nucleus, may link the cytoskeleton with the nuclear envelope, this mechanism seems to be crucial for the control of nuclear polarity, cell movement and, specifically in neurons, nuclear envelope integrity. Participates in the cellular trafficking and may regulate the subcellular location of multipass membrane proteins such as the dopamine transporter SLC6A3, leading to the modulation of dopamine neurotransmission. In the endoplasmic reticulum, plays a role in the quality control of protein folding by increasing clearance of misfolded proteins such as SGCE variants or holding them in an intermediate state for proper refolding. May have a redundant function with TOR1B in non-neural tissues. The sequence is that of Torsin-1A (TOR1A) from Macaca fascicularis (Crab-eating macaque).